The sequence spans 437 residues: Trigger factor (437 aa).

The PPIase FKBP-type domain maps to 165–251 (GDLVVIDFKG…LHTIKEKEKI (87 aa)).

The protein belongs to the FKBP-type PPIase family. Tig subfamily.

The protein localises to the cytoplasm. It catalyses the reaction [protein]-peptidylproline (omega=180) = [protein]-peptidylproline (omega=0). Involved in protein export. Acts as a chaperone by maintaining the newly synthesized protein in an open conformation. Functions as a peptidyl-prolyl cis-trans isomerase. The chain is Trigger factor from Nitratiruptor sp. (strain SB155-2).